Reading from the N-terminus, the 476-residue chain is Amidophosphoribosyltransferase (476 aa).

The propeptide occupies 1–11; sequence MLAEIKGLNEE. Cys-12 acts as the Nucleophile in catalysis. The 220-residue stretch at 12-231 folds into the Glutamine amidotransferase type-2 domain; the sequence is CGVFGIWGHE…PGEMLIINDE (220 aa). Cys-247 serves as a coordination point for [4Fe-4S] cluster. The Mg(2+) site is built by Ser-294, Asp-356, and Asp-357. The [4Fe-4S] cluster site is built by Cys-393, Cys-448, and Cys-451.

The protein in the C-terminal section; belongs to the purine/pyrimidine phosphoribosyltransferase family. Homotetramer. It depends on Mg(2+) as a cofactor. [4Fe-4S] cluster serves as cofactor.

The enzyme catalyses 5-phospho-beta-D-ribosylamine + L-glutamate + diphosphate = 5-phospho-alpha-D-ribose 1-diphosphate + L-glutamine + H2O. The protein operates within purine metabolism; IMP biosynthesis via de novo pathway; N(1)-(5-phospho-D-ribosyl)glycinamide from 5-phospho-alpha-D-ribose 1-diphosphate: step 1/2. Its activity is regulated as follows. Allosterically regulated; subject to end product regulation by purine nucleotides. Catalyzes the formation of phosphoribosylamine from phosphoribosylpyrophosphate (PRPP) and glutamine. The sequence is that of Amidophosphoribosyltransferase from Bacillus subtilis (strain 168).